The primary structure comprises 139 residues: Coat protein TP2 (139 aa).

The protein localises to the virion. The polypeptide is Coat protein TP2 (Thermoproteus tenax virus 1 (strain KRA1) (TTV1)).